We begin with the raw amino-acid sequence, 190 residues long: MQLLMRVPSLPELGELDCNICFRPYNLGARAPRRLPGTARARCGHTLCTACLRELAARGDGSRTAARVVRLRRAVTCPFCRAPSPLPRGGVTEIALDPVLWSRLEEKARAEREGDPMGSPAKDSGEDGEDDDGEAESEKGAGPPSAGWRALRRILDRVLAPARRLRRPLPSNVLYCPEVKDIAHMTRCTL.

The RING-type zinc finger occupies 18-81 (CNICFRPYNL…RRAVTCPFCR (64 aa)). The interval 108–147 (ARAEREGDPMGSPAKDSGEDGEDDDGEAESEKGAGPPSAG) is disordered. Over residues 126–135 (EDGEDDDGEA) the composition is skewed to acidic residues.

In Mus musculus (Mouse), this protein is RING finger protein 227.